Consider the following 824-residue polypeptide: Ras guanine nucleotide exchange factor I (824 aa).

Disordered stretches follow at residues 1 to 51 and 65 to 167; these read MSNP…KPTK and GSNL…LILD. A compositionally biased stretch (low complexity) spans 8 to 41; that stretch reads SNSTNGSSNSLNGESVSPNRLGSSPGSPISKASS. Residues 83 to 95 show a composition bias toward polar residues; sequence NSSVGLLNNSTGS. Over residues 104 to 116 the composition is skewed to low complexity; it reads SSPKSSYILSSSI. Gly residues predominate over residues 117 to 128; it reads GSGGSGGGGGSS. Positions 136 to 167 are enriched in low complexity; the sequence is SASNNSSGPRSRSGSLGKNNSSQQNNNNLILD. Residues 223–255 enclose the LisH domain; it reads GRDNILQLILQHLQFEGLMDSRKILEEEAKIQY. Disordered regions lie at residues 330–354 and 398–425; these read YVDE…TTAT and NTQQ…STGT. A compositionally biased stretch (basic and acidic residues) spans 331 to 341; sequence VDEKDNDKPSK. The segment covering 343–354 has biased composition (low complexity); that stretch reads SPTTATTTTTAT. Residues 413–425 show a composition bias toward polar residues; that stretch reads LKSTQSITGSTGT. The N-terminal Ras-GEF domain occupies 426 to 551; sequence LGPQVKAASL…VISDALNSGL (126 aa). In terms of domain architecture, Ras-GEF spans 585 to 816; the sequence is DEEEISRQLT…YTRSMSFEPR (232 aa).

Its function is as follows. Promotes the exchange of Ras-bound GDP by GTP. This is Ras guanine nucleotide exchange factor I (gefI) from Dictyostelium discoideum (Social amoeba).